Reading from the N-terminus, the 362-residue chain is 5-amino-6-(D-ribitylamino)uracil--L-tyrosine 4-hydroxyphenyl transferase (362 aa).

A Radical SAM core domain is found at 48–294 (ITYVVNRNIN…GDTIKNIQVS (247 aa)). [4Fe-4S] cluster is bound by residues Cys-62, Cys-66, and Cys-69.

The protein belongs to the radical SAM superfamily. CofH family. Consists of two subunits, CofG and CofH. The cofactor is [4Fe-4S] cluster.

It carries out the reaction 5-amino-6-(D-ribitylamino)uracil + L-tyrosine + S-adenosyl-L-methionine = 5-amino-5-(4-hydroxybenzyl)-6-(D-ribitylimino)-5,6-dihydrouracil + 2-iminoacetate + 5'-deoxyadenosine + L-methionine + H(+). Its pathway is cofactor biosynthesis; coenzyme F0 biosynthesis. Catalyzes the radical-mediated synthesis of 5-amino-5-(4-hydroxybenzyl)-6-(D-ribitylimino)-5,6-dihydrouracil from 5-amino-6-(D-ribitylamino)uracil and L-tyrosine. The chain is 5-amino-6-(D-ribitylamino)uracil--L-tyrosine 4-hydroxyphenyl transferase from Methanococcus aeolicus (strain ATCC BAA-1280 / DSM 17508 / OCM 812 / Nankai-3).